A 119-amino-acid chain; its full sequence is Immunoglobulin heavy variable 2-5 (119 aa).

An N-terminal signal peptide occupies residues 1–19; it reads MDTLCSTLLLLTIPSWVLS. Residue Q20 is modified to Pyrrolidone carboxylic acid. The tract at residues 20-44 is framework-1; that stretch reads QITLKESGPTLVKPTQTLTLTCTFS. An Ig-like domain is found at 20 to 119; the sequence is QITLKESGPT…DTATYYCAHR (100 aa). Residues C41 and C116 are joined by a disulfide bond. The segment at 45-54 is complementarity-determining-1; sequence GFSLSTSGVG. Residues 55–71 form a framework-2 region; the sequence is VGWIRQPPGKALEWLAL. Residues 72 to 78 form a complementarity-determining-2 region; the sequence is IYWDDDK. The tract at residues 79–116 is framework-3; it reads RYSPSLKSRLTITKDTSKNQVVLTMTNMDPVDTATYYC. Positions 117 to 119 are complementarity-determining-3; that stretch reads AHR.

As to quaternary structure, immunoglobulins are composed of two identical heavy chains and two identical light chains; disulfide-linked.

It localises to the secreted. The protein localises to the cell membrane. V region of the variable domain of immunoglobulin heavy chains that participates in the antigen recognition. Immunoglobulins, also known as antibodies, are membrane-bound or secreted glycoproteins produced by B lymphocytes. In the recognition phase of humoral immunity, the membrane-bound immunoglobulins serve as receptors which, upon binding of a specific antigen, trigger the clonal expansion and differentiation of B lymphocytes into immunoglobulins-secreting plasma cells. Secreted immunoglobulins mediate the effector phase of humoral immunity, which results in the elimination of bound antigens. The antigen binding site is formed by the variable domain of one heavy chain, together with that of its associated light chain. Thus, each immunoglobulin has two antigen binding sites with remarkable affinity for a particular antigen. The variable domains are assembled by a process called V-(D)-J rearrangement and can then be subjected to somatic hypermutations which, after exposure to antigen and selection, allow affinity maturation for a particular antigen. This Homo sapiens (Human) protein is Immunoglobulin heavy variable 2-5.